Reading from the N-terminus, the 89-residue chain is OMEGA-ectatommitoxin(02)-Rm1b (89 aa).

A signal peptide spans Met1–Gly30. Disulfide bonds link Cys39/Cys52, Cys47/Cys68, and Cys70/Cys79. The EGF-like domain maps to Tyr43–Gly80.

Belongs to the EGF domain peptide family. In terms of tissue distribution, expressed by the venom gland.

Its subcellular location is the secreted. Functionally, ant peptide with probable defensive activity which acts as a potent agonist of the mammalian epidermal growth factor receptor (EGFR). Mimics, both structurally and functionally, vertebrate epidermal growth factor (EGF) peptide hormones. In vivo, intraplantar injection in mice causes long-lasting (several days) hypersensitivity of the injected paw to both mechanical and thermal stimuli. Its long-lasting effect is unusual for venom toxins whose effects are usually immediate. One possible explanation is that it would reduce the duration of a nest attack, discourage future attacks, or enhance the actions of subsequent exposure to other pain-inducing venom peptides. The polypeptide is OMEGA-ectatommitoxin(02)-Rm1b (Rhytidoponera metallica (Australian green-headed ant)).